The following is a 136-amino-acid chain: MIDEIDKKILDELSKNSRLTMKKLGEKVHLTAPATASRVVKLIDNGIIKGCSIEVNQVKLGFSIHAFLNIYIEKIHHQPYLAFIETQDNYVINNYKVSGDGCYLLECKFPSNEVLDQFLNDLNKHANYKVSIVIGK.

The 62-residue stretch at 2 to 63 (IDEIDKKILD…EVNQVKLGFS (62 aa)) folds into the HTH asnC-type domain. A DNA-binding region (H-T-H motif) is located at residues 21-40 (MKKLGEKVHLTAPATASRVV).

Its function is as follows. Negative regulation of glyA transcription and kinB-dependent sporulation. The sequence is that of HTH-type transcriptional regulator LrpA (lrpA) from Bacillus subtilis (strain 168).